Reading from the N-terminus, the 293-residue chain is uncharacterized protein (293 aa).

An HTH lysR-type domain is found at 1-58; sequence MQLQELHMLVVLAEELNMRKAAERLFVSQPALSQRLQTIEKAWGTKIFLRSQKGLTVT. Positions 18–37 form a DNA-binding region, H-T-H motif; sequence MRKAAERLFVSQPALSQRLQ.

This sequence belongs to the LysR transcriptional regulatory family.

This is an uncharacterized protein from Bacillus subtilis (strain 168).